Here is a 367-residue protein sequence, read N- to C-terminus: Cellular tumor antigen p53 (367 aa).

A transcription activation (acidic) region spans residues 1 to 30 (MAEEMEPLLEPTEVFMDLWSMLPYSMQQLP). The tract at residues 30–84 (PLPEDHSNWQELSPLEPSDPPPPPPPPPLPLAAAAPPPLNPPTPPRAAPSPVVPS) is disordered. Residues 46–81 (PSDPPPPPPPPPLPLAAAAPPPLNPPTPPRAAPSPV) are compositionally biased toward pro residues. The DNA-binding element occupies 87–278 (DYGGDFDFRV…KIEEENFRKR (192 aa)). Residues Cys161, His164, Cys224, and Cys228 each coordinate Zn(2+). Positions 259 to 266 (RVCACPGR) are interaction with DNA. Disordered stretches follow at residues 275-303 (FRKRGGAGGVAKRAMSPPTEAPEPPKKRV) and 333-367 (LAEGGSAPRPSKGRRVKVEGPQPSCGKKLLQKGSD). The Bipartite nuclear localization signal signature appears at 286 to 302 (KRAMSPPTEAPEPPKKR). Residues 308–339 (NEIFYLQVRGRRRYEMLKEINEALQLAEGGSA) are oligomerization. The short motif at 322–333 (EMLKEINEALQL) is the Nuclear export signal element. The interval 347–364 (RVKVEGPQPSCGKKLLQK) is basic (repression of DNA-binding).

The protein belongs to the p53 family. Binds DNA as a homotetramer. Zn(2+) is required as a cofactor.

The protein localises to the cytoplasm. Its subcellular location is the nucleus. Functionally, multifunctional transcription factor that induces cell cycle arrest, DNA repair or apoptosis upon binding to its target DNA sequence. Acts as a tumor suppressor in many tumor types; induces growth arrest or apoptosis depending on the physiological circumstances and cell type. Negatively regulates cell division by controlling expression of a set of genes required for this process. One of the activated genes is an inhibitor of cyclin-dependent kinases. Apoptosis induction seems to be mediated either by stimulation of BAX and FAS antigen expression, or by repression of Bcl-2 expression. The sequence is that of Cellular tumor antigen p53 (TP53) from Gallus gallus (Chicken).